We begin with the raw amino-acid sequence, 251 residues long: Ubiquinone/menaquinone biosynthesis C-methyltransferase UbiE (251 aa).

S-adenosyl-L-methionine is bound by residues threonine 74, aspartate 95, and asparagine 123–alanine 124.

The protein belongs to the class I-like SAM-binding methyltransferase superfamily. MenG/UbiE family.

It catalyses the reaction a 2-demethylmenaquinol + S-adenosyl-L-methionine = a menaquinol + S-adenosyl-L-homocysteine + H(+). The enzyme catalyses a 2-methoxy-6-(all-trans-polyprenyl)benzene-1,4-diol + S-adenosyl-L-methionine = a 5-methoxy-2-methyl-3-(all-trans-polyprenyl)benzene-1,4-diol + S-adenosyl-L-homocysteine + H(+). The protein operates within quinol/quinone metabolism; menaquinone biosynthesis; menaquinol from 1,4-dihydroxy-2-naphthoate: step 2/2. Its pathway is cofactor biosynthesis; ubiquinone biosynthesis. Methyltransferase required for the conversion of demethylmenaquinol (DMKH2) to menaquinol (MKH2) and the conversion of 2-polyprenyl-6-methoxy-1,4-benzoquinol (DDMQH2) to 2-polyprenyl-3-methyl-6-methoxy-1,4-benzoquinol (DMQH2). The polypeptide is Ubiquinone/menaquinone biosynthesis C-methyltransferase UbiE (Shewanella frigidimarina (strain NCIMB 400)).